The chain runs to 97 residues: UPF0235 protein HAPS_1504 (97 aa).

Belongs to the UPF0235 family.

This chain is UPF0235 protein HAPS_1504, found in Glaesserella parasuis serovar 5 (strain SH0165) (Haemophilus parasuis).